A 430-amino-acid chain; its full sequence is Gamma-glutamyl phosphate reductase (430 aa).

This sequence belongs to the gamma-glutamyl phosphate reductase family.

The protein localises to the cytoplasm. It carries out the reaction L-glutamate 5-semialdehyde + phosphate + NADP(+) = L-glutamyl 5-phosphate + NADPH + H(+). Its pathway is amino-acid biosynthesis; L-proline biosynthesis; L-glutamate 5-semialdehyde from L-glutamate: step 2/2. Its function is as follows. Catalyzes the NADPH-dependent reduction of L-glutamate 5-phosphate into L-glutamate 5-semialdehyde and phosphate. The product spontaneously undergoes cyclization to form 1-pyrroline-5-carboxylate. This Rhodopseudomonas palustris (strain ATCC BAA-98 / CGA009) protein is Gamma-glutamyl phosphate reductase.